Here is a 194-residue protein sequence, read N- to C-terminus: dCTP deaminase (194 aa).

Residues 110–115 (RSSLAR), Asp128, 136–138 (VLE), Tyr171, Lys178, and Gln182 contribute to the dCTP site. Glu138 acts as the Proton donor/acceptor in catalysis.

The protein belongs to the dCTP deaminase family. Homotrimer.

The catalysed reaction is dCTP + H2O + H(+) = dUTP + NH4(+). The protein operates within pyrimidine metabolism; dUMP biosynthesis; dUMP from dCTP (dUTP route): step 1/2. Its function is as follows. Catalyzes the deamination of dCTP to dUTP. This is dCTP deaminase from Glaesserella parasuis serovar 5 (strain SH0165) (Haemophilus parasuis).